Reading from the N-terminus, the 277-residue chain is Phosphoenolpyruvate synthase regulatory protein (277 aa).

157 to 164 (GVSRCGKT) lines the ADP pocket.

It belongs to the pyruvate, phosphate/water dikinase regulatory protein family. PSRP subfamily.

The catalysed reaction is [pyruvate, water dikinase] + ADP = [pyruvate, water dikinase]-phosphate + AMP + H(+). It catalyses the reaction [pyruvate, water dikinase]-phosphate + phosphate + H(+) = [pyruvate, water dikinase] + diphosphate. Bifunctional serine/threonine kinase and phosphorylase involved in the regulation of the phosphoenolpyruvate synthase (PEPS) by catalyzing its phosphorylation/dephosphorylation. The sequence is that of Phosphoenolpyruvate synthase regulatory protein from Escherichia coli O1:K1 / APEC.